Consider the following 282-residue polypeptide: Phosphatidylglycerol--prolipoprotein diacylglyceryl transferase (282 aa).

The next 3 helical transmembrane spans lie at 19-39 (IGPF…VFGW), 58-78 (ISLV…ILGG), and 104-124 (GGMS…WFAY). Position 149 (Arg-149) interacts with a 1,2-diacyl-sn-glycero-3-phospho-(1'-sn-glycerol). 3 consecutive transmembrane segments (helical) span residues 190–210 (AGME…LGAL), 214–234 (GMIL…GEHF), and 250–270 (MGML…VLAI).

Belongs to the Lgt family.

Its subcellular location is the cell inner membrane. The enzyme catalyses L-cysteinyl-[prolipoprotein] + a 1,2-diacyl-sn-glycero-3-phospho-(1'-sn-glycerol) = an S-1,2-diacyl-sn-glyceryl-L-cysteinyl-[prolipoprotein] + sn-glycerol 1-phosphate + H(+). Its pathway is protein modification; lipoprotein biosynthesis (diacylglyceryl transfer). In terms of biological role, catalyzes the transfer of the diacylglyceryl group from phosphatidylglycerol to the sulfhydryl group of the N-terminal cysteine of a prolipoprotein, the first step in the formation of mature lipoproteins. The chain is Phosphatidylglycerol--prolipoprotein diacylglyceryl transferase from Bradyrhizobium diazoefficiens (strain JCM 10833 / BCRC 13528 / IAM 13628 / NBRC 14792 / USDA 110).